Here is a 770-residue protein sequence, read N- to C-terminus: Amyloid-beta precursor protein (770 aa).

Positions 1–17 are cleaved as a signal peptide; sequence MLPGLALLLLAAWTARA. The Extracellular segment spans residues 18 to 701; sequence LEVPTDGNAG…AEDVGSNKGA (684 aa). Residues 28–123 form a GFLD subdomain region; the sequence is LLAEPQIAMF…PYRCLVGEFV (96 aa). The region spanning 28–189 is the E1 domain; that stretch reads LLAEPQIAMF…RGVEFVCCPL (162 aa). Cystine bridges form between cysteine 38–cysteine 62, cysteine 73–cysteine 117, cysteine 98–cysteine 105, cysteine 133–cysteine 187, cysteine 144–cysteine 174, and cysteine 158–cysteine 186. Position 96-110 (96-110) interacts with heparin; the sequence is NWCKRGRKQCKTHPH. Residues 131–189 are cuBD subdomain; that stretch reads DKCKFLHQERMDVCETHLHWHTVAKETCSEKSTNLHDYGMLLPCGIDKFRGVEFVCCPL. Positions 147, 151, and 168 each coordinate Cu(2+). The zinc-binding stretch occupies residues 181 to 188; that stretch reads GVEFVCCP. Zn(2+) is bound by residues glutamate 183, cysteine 186, and cysteine 187. Residues 194-207 are compositionally biased toward acidic residues; it reads DNVDSADAEEDDSD. A disordered region spans residues 194–284; it reads DNVDSADAEE…TTTTTTESVE (91 aa). The residue at position 198 (serine 198) is a Phosphoserine; by CK2. Serine 206 is subject to Phosphoserine; by CK1. Tyrosine 217 and tyrosine 262 each carry sulfotyrosine. Over residues 228-264 the composition is skewed to acidic residues; sequence VAEEEEVAEVEEEEADDDEDDEDGDEVEEEAEEPYEE. Residues 268 to 281 are compositionally biased toward low complexity; it reads RTTSIATTTTTTTE. Disulfide bonds link cysteine 291-cysteine 341, cysteine 300-cysteine 324, and cysteine 316-cysteine 337. The BPTI/Kunitz inhibitor domain maps to 291-341; sequence CSEQAETGPCRAMISRWYFDVTEGKCAPFFYGGCGGNRNNFDTEEYCMAVC. At tyrosine 336 the chain carries Sulfotyrosine. The short motif at 344 to 365 is the OX-2 element; the sequence is VMSQSLRKTTREPLTRDPVKLP. One can recognise an E2 domain in the interval 374-565; that stretch reads AVDKYLETPG…EEIQDEVDEL (192 aa). The heparin-binding stretch occupies residues 391 to 423; sequence FQKAKERLEAKHRERMSQVMREWEEAERQAKNL. Serine 441 is modified (phosphoserine). Positions 491-522 are heparin-binding; the sequence is FNMLKKYVRAEQKDRQHTLKHFEHVRMVDPKK. A Phosphotyrosine modification is found at tyrosine 497. The collagen-binding stretch occupies residues 523–540; it reads AAQIRSQVMTHLRVIYER. Residues asparagine 542 and asparagine 571 are each glycosylated (N-linked (GlcNAc...) asparagine). Residues histidine 677, tyrosine 681, histidine 684, and histidine 685 each coordinate Cu(2+). Residues histidine 677, tyrosine 681, histidine 684, and histidine 685 each contribute to the Zn(2+) site. The tract at residues 695 to 722 is interaction with PSEN1; the sequence is VGSNKGAIIGLMVGGVVIATVIVITLVM. A helical transmembrane segment spans residues 702–722; that stretch reads IIGLMVGGVVIATVIVITLVM. At 723-770 the chain is on the cytoplasmic side; the sequence is LKKKQYTSIHHGVVEVDAAVTPEERHLSKMQQNGYENPTYKFFEQMQN. A Basolateral sorting signal motif is present at residues 724–734; the sequence is KKKQYTSIHHG. Threonine 729 is modified (phosphothreonine). Serine 730 bears the Phosphoserine; by APP-kinase I mark. Residues 732–751 are interaction with G(o)-alpha; that stretch reads HHGVVEVDAAVTPEERHLSK. Threonine 743 carries the phosphothreonine; by CDK5 and MAPK10 modification. A required for the interaction with KIF5B and for anterograde transport in axons region spans residues 756–770; it reads GYENPTYKFFEQMQN. A Phosphotyrosine; by ABL1 modification is found at tyrosine 757. A YENPXY motif; contains endocytosis signal motif is present at residues 757–762; that stretch reads YENPTY. Lysine 763 is covalently cross-linked (Glycyl lysine isopeptide (Lys-Gly) (interchain with G-Cter in ubiquitin)).

The protein belongs to the APP family. In terms of assembly, binds, via its C-terminus, to the PID domain of several cytoplasmic proteins, including APBB family members, the APBA family, MAPK8IP1, SHC1 and NUMB and DAB1. Binding to DAB1 inhibits its serine phosphorylation. Interacts (via NPXY motif) with DAB2 (via PID domain); the interaction is impaired by tyrosine phosphorylation of the NPXY motif. Also interacts with GPCR-like protein BPP, APPBP1, IB1, KNS2 (via its TPR domains), APPBP2 (via BaSS) and DDB1. In vitro, it binds MAPT via the MT-binding domains. Associates with microtubules in the presence of ATP and in a kinesin-dependent manner. Interacts, through a C-terminal domain, with GNAO1. Amyloid-beta protein 42 binds CHRNA7 in hippocampal neurons. Amyloid-beta associates with HADH2. Interacts with CPEB1, ANKS1B and AGER. Interacts with ITM2B. Interacts with ITM2C. Interacts with IDE. Can form homodimers; dimerization is enhanced in the presence of Cu(2+) ions. Can form homodimers; this is promoted by heparin binding. Amyloid-beta protein 40 interacts with S100A9. CTF-alpha product of APP interacts with GSAP. Isoform APP695 interacts with SORL1 (via N-terminal ectodomain); this interaction retains APP in the trans-Golgi network and reduces processing into soluble APP-alpha and amyloid-beta peptides. Isoform APP770 interacts with SORL1. The C99 fragment also interacts with SORL1. Interacts with PLD3. Interacts with VDAC1. Interacts with NSG1; could regulate APP processing. Amyloid-beta protein 42 interacts with FPR2. Interacts (via transmembrane region) with PSEN1; the interaction is direct. Interacts with LRRK2. Interacts (via cytoplasmic domain) with KIF5B. Interacts (via C-terminus) with APBB2/FE65L1 (via C-terminus). Interacts (via intracellular domain) with APBB3. Proteolytically processed under normal cellular conditions. Cleavage either by alpha-secretase, beta-secretase or theta-secretase leads to generation and extracellular release of soluble APP peptides, S-APP-alpha and S-APP-beta, and the retention of corresponding membrane-anchored C-terminal fragments, C80, C83 and C99. Subsequent processing of C80 and C83 by gamma-secretase yields P3 peptides. This is the major secretory pathway and is non-amyloidogenic. Alternatively, presenilin/nicastrin-mediated gamma-secretase processing of C99 releases the amyloid-beta proteins, amyloid-beta protein 40 and amyloid-beta protein 42, major components of amyloid plaques, and the cytotoxic C-terminal fragments, gamma-CTF(50), gamma-CTF(57) and gamma-CTF(59). PSEN1 cleavage is more efficient with C83 than with C99 as substrate (in vitro). Amyloid-beta protein 40 and Amyloid-beta protein 42 are cleaved by ACE. Many other minor amyloid-beta peptides, amyloid-beta 1-X peptides, are found in cerebral spinal fluid (CSF) including the amyloid-beta X-15 peptides, produced from the cleavage by alpha-secretase. In terms of processing, proteolytically cleaved by caspases during neuronal apoptosis. Cleavage at Asp-739 by either caspase-3, -8 or -9 results in the production of the neurotoxic C31 peptide and the increased production of amyloid-beta peptides. Post-translationally, N- and O-glycosylated. Phosphorylation in the C-terminal on tyrosine, threonine and serine residues is neuron-specific. Phosphorylation can affect APP processing, neuronal differentiation and interaction with other proteins. Phosphorylated on Thr-743 in neuronal cells by Cdc5 kinase and Mapk10, in dividing cells by Cdc2 kinase in a cell-cycle dependent manner with maximal levels at the G2/M phase and, in vitro, by GSK-3-beta. The Thr-743 phosphorylated form causes a conformational change which reduces binding of Fe65 family members. In dopaminergic (DA) neurons, phosphorylation on Thr-743 by LRKK2 promotes the production and the nuclear translocation of the APP intracellular domain (AICD) which induces DA neuron apoptosis. Phosphorylation on Tyr-757 is required for SHC binding. Phosphorylated in the extracellular domain by casein kinases on both soluble and membrane-bound APP. This phosphorylation is inhibited by heparin. In terms of processing, trophic-factor deprivation triggers the cleavage of surface APP by beta-secretase to release sAPP-beta which is further cleaved to release an N-terminal fragment of APP (N-APP). Post-translationally, amyloid-beta peptides are degraded by IDE. Sulfated on tyrosine residues.

Its subcellular location is the cell membrane. It localises to the membrane. The protein resides in the perikaryon. The protein localises to the cell projection. It is found in the growth cone. Its subcellular location is the clathrin-coated pit. It localises to the early endosome. The protein resides in the cytoplasmic vesicle. The protein localises to the endoplasmic reticulum. It is found in the golgi apparatus. Its subcellular location is the secreted. It localises to the cell surface. The protein resides in the nucleus. The protein localises to the cytoplasm. Functionally, functions as a cell surface receptor and performs physiological functions on the surface of neurons relevant to neurite growth, neuronal adhesion and axonogenesis. Interaction between APP molecules on neighboring cells promotes synaptogenesis. Involved in cell mobility and transcription regulation through protein-protein interactions. Can promote transcription activation through binding to APBB1-KAT5 and inhibit Notch signaling through interaction with Numb. Couples to apoptosis-inducing pathways such as those mediated by G(o) and JIP. Inhibits G(o)-alpha ATPase activity. Acts as a kinesin I membrane receptor, mediating the axonal transport of beta-secretase and presenilin 1. By acting as a kinesin I membrane receptor, plays a role in axonal anterograde transport of cargo towards synapses in axons. May be involved in copper homeostasis/oxidative stress through copper ion reduction. In vitro, copper-metallated APP induces neuronal death directly or is potentiated through Cu(2+)-mediated low-density lipoprotein oxidation. Can regulate neurite outgrowth through binding to components of the extracellular matrix such as heparin and collagen I and IV. Induces a AGER-dependent pathway that involves activation of p38 MAPK, resulting in internalization of amyloid-beta peptide and mitochondrial dysfunction in cultured cortical neurons. Provides Cu(2+) ions for GPC1 which are required for release of nitric oxide (NO) and subsequent degradation of the heparan sulfate chains on GPC1. Amyloid-beta peptides are lipophilic metal chelators with metal-reducing activity. Binds transient metals such as copper, zinc and iron. In terms of biological role, the gamma-CTF peptides as well as the caspase-cleaved peptides, including C31, are potent enhancers of neuronal apoptosis. In Macaca fascicularis (Crab-eating macaque), this protein is Amyloid-beta precursor protein.